Here is a 159-residue protein sequence, read N- to C-terminus: 6,7-dimethyl-8-ribityllumazine synthase (159 aa).

Residues W27, 62-64 (SWE), and 86-88 (VLI) contribute to the 5-amino-6-(D-ribitylamino)uracil site. Position 91–92 (91–92 (ST)) interacts with (2S)-2-hydroxy-3-oxobutyl phosphate. The active-site Proton donor is H94. L119 is a binding site for 5-amino-6-(D-ribitylamino)uracil. R133 is a (2S)-2-hydroxy-3-oxobutyl phosphate binding site.

In terms of assembly, homopentamer.

The catalysed reaction is (2S)-2-hydroxy-3-oxobutyl phosphate + 5-amino-6-(D-ribitylamino)uracil = 6,7-dimethyl-8-(1-D-ribityl)lumazine + phosphate + 2 H2O + H(+). It functions in the pathway cofactor biosynthesis; riboflavin biosynthesis; riboflavin from 2-hydroxy-3-oxobutyl phosphate and 5-amino-6-(D-ribitylamino)uracil: step 1/2. With respect to regulation, competitively inhibited by riboflavin (Ki of 17 uM). Its function is as follows. Catalyzes the formation of 6,7-dimethyl-8-ribityllumazine by condensation of 5-amino-6-(D-ribitylamino)uracil with 3,4-dihydroxy-2-butanone 4-phosphate. This is the penultimate step in the biosynthesis of riboflavin. Also binds riboflavin with an unexpected high affinity. In Schizosaccharomyces pombe (strain 972 / ATCC 24843) (Fission yeast), this protein is 6,7-dimethyl-8-ribityllumazine synthase (rib4).